Reading from the N-terminus, the 1380-residue chain is Carboxypeptidase D (1380 aa).

The signal sequence occupies residues 1 to 31 (MASGRDERPPWRLGRLLLLMCLLLLGSSARA). The Extracellular portion of the chain corresponds to 32 to 1299 (AHIKKAEATT…DNRIFGLPRE (1268 aa)). Residues 57-380 (RYYHEEELES…ESLITLIEKV (324 aa)) enclose the Peptidase M14 1 domain. Residues His-139 and Glu-142 each coordinate Zn(2+). The Cell attachment site motif lies at 162–164 (RGD). Asn-172 carries an N-linked (GlcNAc...) asparagine glycan. The disordered stretch occupies residues 190 to 232 (AREGDCGFGDGGPSGASGRDNSRGRDLNRSFPDQFSTGEPPAL). The span at 195–204 (CGFGDGGPSG) shows a compositional bias: gly residues. Residue Asn-217 is glycosylated (N-linked (GlcNAc...) asparagine). His-257 is a binding site for Zn(2+). Tyr-265 carries the post-translational modification Phosphotyrosine. Residue Ser-270 is modified to Phosphoserine. The Proton donor/acceptor role is filled by Glu-350. Residues Asn-399, Asn-410, Asn-429, and Asn-522 are each glycosylated (N-linked (GlcNAc...) asparagine). Residues 502–792 (HHHHFPDMEI…RSLIQFMKQV (291 aa)) form the Peptidase M14 2 domain. His-564 and Glu-567 together coordinate Zn(2+). The N-linked (GlcNAc...) asparagine glycan is linked to Asn-626. His-671 contacts Zn(2+). The active-site Proton donor/acceptor is Glu-762. 4 N-linked (GlcNAc...) asparagine glycosylation sites follow: Asn-811, Asn-855, Asn-867, and Asn-879. Residues 874-899 (STDSNNESKKGKGASSSTNDASDPTT) are disordered. Positions 887 to 897 (ASSSTNDASDP) are enriched in polar residues. One can recognise a Peptidase M14 3 domain in the interval 932-1211 (RYHSYKDLSE…RSLLSMLVEV (280 aa)). Residues Asn-955, Asn-978, Asn-1070, and Asn-1142 are each glycosylated (N-linked (GlcNAc...) asparagine). The helical transmembrane segment at 1300–1320 (LVVTVSGATMSALILTACIIW) threads the bilayer. 3 S-palmitoyl cysteine lipidation sites follow: Cys-1317, Cys-1321, and Cys-1323. At 1321–1380 (CICSIKSNRHKDGFHRLRQHHDEYEDEIRMMSTGSKKSLLSHEFQDETDTEEETLYSSKH) the chain is on the cytoplasmic side. Residues Ser-1358 and Ser-1361 each carry the phosphoserine modification. The interval 1359–1380 (LLSHEFQDETDTEEETLYSSKH) is disordered. Phosphothreonine occurs at positions 1368 and 1370.

Belongs to the peptidase M14 family. Zn(2+) is required as a cofactor. Highly expressed in placenta, pancreas and hepatoma cells. Lower levels found in skeletal muscle, heart and colon carcinoma and melanoma cell lines.

It localises to the cell membrane. The catalysed reaction is Releases C-terminal Arg and Lys from polypeptides.. This chain is Carboxypeptidase D (CPD), found in Homo sapiens (Human).